The following is a 194-amino-acid chain: Large ribosomal subunit protein bL25B (194 aa).

This sequence belongs to the bacterial ribosomal protein bL25 family. CTC subfamily. Part of the 50S ribosomal subunit; part of the 5S rRNA/L5/L18/L25 subcomplex. Contacts the 5S rRNA. Binds to the 5S rRNA independently of L5 and L18.

This is one of the proteins that binds to the 5S RNA in the ribosome where it forms part of the central protuberance. The polypeptide is Large ribosomal subunit protein bL25B (Symbiobacterium thermophilum (strain DSM 24528 / JCM 14929 / IAM 14863 / T)).